Consider the following 584-residue polypeptide: Cytochrome c oxidase subunit 1 (584 aa).

Residues 1–25 (MTAVAPRVDGHVAPQRPEPTGHARK) are disordered. Residues 43-63 (IMYIIMSFSFFFLGGLMALLI) form a helical membrane-spanning segment. H87 serves as a coordination point for Fe(II)-heme a. Transmembrane regions (helical) follow at residues 90-110 (VMLLLYGTPIVWGFANYVLPL), 122-142 (LNAFGFWITTVGGVAMLTGFL), 171-191 (MWIVGVGATGIGSVASAINML), 214-234 (IFVVSVLALLIFPLLLAAALG), 259-279 (LFWFFGHPEVYVLALPFFGIV), and 292-312 (FGYVGLIFATLSIGALSMAVW). Positions 265 and 269 each coordinate Cu cation. A cross-link (1'-histidyl-3'-tyrosine (His-Tyr)) is located at residues 265 to 269 (HPEVY). H314 and H315 together coordinate Cu cation. Helical transmembrane passes span 316-336 (MFVTGAVLLPFFSFMTFLISV) and 360-380 (MIWSVGFMATFLFGGLTGIML). H398 is a binding site for heme a3. 3 consecutive transmembrane segments (helical) span residues 399-419 (FHYTLFGTVVFASCAGVYFWF), 434-454 (IHFWLTFVGFHGTFLIQHWVG), and 477-497 (ISTVFSFLLGLSVIPFIWNVF). H400 lines the Fe(II)-heme a pocket. Residues 564 to 584 (HDDINAPELGTAPALASDSSR) are disordered.

As to quaternary structure, associates with subunits II, III and IV to form cytochrome c oxidase. The 4 subunit cytochrome c oxidase forms a supercomplex with the menaquinol-cytochrome c reductase complex (cytochrome bc1). Requires Cu(2+) as cofactor. Heme is required as a cofactor.

It is found in the cell membrane. It catalyses the reaction 4 Fe(II)-[cytochrome c] + O2 + 8 H(+)(in) = 4 Fe(III)-[cytochrome c] + 2 H2O + 4 H(+)(out). It functions in the pathway energy metabolism; oxidative phosphorylation. Its function is as follows. Cytochrome c oxidase is the component of the respiratory chain that catalyzes the reduction of oxygen to water. Subunits 1-3 form the functional core of the enzyme complex. CO I is the catalytic subunit of the enzyme. Electrons originating in cytochrome c are transferred via the copper A center of subunit 2 and heme A of subunit 1 to the bimetallic center formed by heme A3 and copper B. The sequence is that of Cytochrome c oxidase subunit 1 (ctaD) from Corynebacterium glutamicum (strain ATCC 13032 / DSM 20300 / JCM 1318 / BCRC 11384 / CCUG 27702 / LMG 3730 / NBRC 12168 / NCIMB 10025 / NRRL B-2784 / 534).